We begin with the raw amino-acid sequence, 274 residues long: Large ribosomal subunit protein uL2cz/uL2cy (274 aa).

2 disordered regions span residues 1 to 20 (MAIHLYKTSTPSTRNGAVDS) and 223 to 274 (MNPV…RRSK).

The protein belongs to the universal ribosomal protein uL2 family. In terms of assembly, part of the 50S ribosomal subunit.

It is found in the plastid. The protein resides in the chloroplast. The chain is Large ribosomal subunit protein uL2cz/uL2cy (rpl2-A) from Eucalyptus globulus subsp. globulus (Tasmanian blue gum).